Here is a 192-residue protein sequence, read N- to C-terminus: Pyridoxal 5'-phosphate synthase subunit PdxT (192 aa).

53 to 55 (GES) contacts L-glutamine. Cys82 (nucleophile) is an active-site residue. L-glutamine contacts are provided by residues Arg109 and 137–138 (IR). Active-site charge relay system residues include His173 and Glu175.

It belongs to the glutaminase PdxT/SNO family. In terms of assembly, in the presence of PdxS, forms a dodecamer of heterodimers. Only shows activity in the heterodimer.

The catalysed reaction is aldehydo-D-ribose 5-phosphate + D-glyceraldehyde 3-phosphate + L-glutamine = pyridoxal 5'-phosphate + L-glutamate + phosphate + 3 H2O + H(+). It carries out the reaction L-glutamine + H2O = L-glutamate + NH4(+). It participates in cofactor biosynthesis; pyridoxal 5'-phosphate biosynthesis. Its function is as follows. Catalyzes the hydrolysis of glutamine to glutamate and ammonia as part of the biosynthesis of pyridoxal 5'-phosphate. The resulting ammonia molecule is channeled to the active site of PdxS. This Methanoculleus marisnigri (strain ATCC 35101 / DSM 1498 / JR1) protein is Pyridoxal 5'-phosphate synthase subunit PdxT.